We begin with the raw amino-acid sequence, 211 residues long: Adenylate kinase (211 aa).

ATP is bound at residue G10–T15. The tract at residues S30–V59 is NMP. Residues T31, R36, E57–V59, G85–R88, and Q92 each bind AMP. An LID region spans residues G121–D158. R122 lines the ATP pocket. Zn(2+) contacts are provided by C125 and C128. Residue I131–F132 participates in ATP binding. Residues C145 and C148 each contribute to the Zn(2+) site. Positions 155 and 166 each coordinate AMP. V194 lines the ATP pocket.

The protein belongs to the adenylate kinase family. In terms of assembly, monomer.

The protein localises to the cytoplasm. The catalysed reaction is AMP + ATP = 2 ADP. Its pathway is purine metabolism; AMP biosynthesis via salvage pathway; AMP from ADP: step 1/1. Catalyzes the reversible transfer of the terminal phosphate group between ATP and AMP. Plays an important role in cellular energy homeostasis and in adenine nucleotide metabolism. The chain is Adenylate kinase from Borreliella burgdorferi (strain ATCC 35210 / DSM 4680 / CIP 102532 / B31) (Borrelia burgdorferi).